The sequence spans 67 residues: DNA-directed RNA polymerase subunit omega (67 aa).

Belongs to the RNA polymerase subunit omega family. As to quaternary structure, the RNAP catalytic core consists of 2 alpha, 1 beta, 1 beta' and 1 omega subunit. When a sigma factor is associated with the core the holoenzyme is formed, which can initiate transcription.

The catalysed reaction is RNA(n) + a ribonucleoside 5'-triphosphate = RNA(n+1) + diphosphate. Its function is as follows. Promotes RNA polymerase assembly. Latches the N- and C-terminal regions of the beta' subunit thereby facilitating its interaction with the beta and alpha subunits. The sequence is that of DNA-directed RNA polymerase subunit omega from Moorella thermoacetica (strain ATCC 39073 / JCM 9320).